The chain runs to 239 residues: Ribonuclease PH (239 aa).

Phosphate-binding positions include arginine 86 and glycine 124–arginine 126.

This sequence belongs to the RNase PH family. Homohexameric ring arranged as a trimer of dimers.

The enzyme catalyses tRNA(n+1) + phosphate = tRNA(n) + a ribonucleoside 5'-diphosphate. In terms of biological role, phosphorolytic 3'-5' exoribonuclease that plays an important role in tRNA 3'-end maturation. Removes nucleotide residues following the 3'-CCA terminus of tRNAs; can also add nucleotides to the ends of RNA molecules by using nucleoside diphosphates as substrates, but this may not be physiologically important. Probably plays a role in initiation of 16S rRNA degradation (leading to ribosome degradation) during starvation. This chain is Ribonuclease PH, found in Sinorhizobium fredii (strain NBRC 101917 / NGR234).